Here is a 600-residue protein sequence, read N- to C-terminus: Copine-A (600 aa).

2 consecutive C2 domains span residues 1 to 111 (MNLK…TVCL) and 116 to 246 (KSGK…NVIN). Residues aspartate 23, aspartate 29, aspartate 82, aspartate 84, aspartate 89, aspartate 151, aspartate 158, aspartate 215, aspartate 217, and aspartate 223 each coordinate Ca(2+). In terms of domain architecture, VWFA spans 286 to 503 (NLIVGIDCTA…ELAAEVLREI (218 aa)). Over residues 535-549 (YDNPTTTTTATSPST) the composition is skewed to low complexity. The segment at 535–583 (YDNPTTTTTATSPSTGIDLNKGSNVGLNLTKTESSPSPSGGAGIDLNKG) is disordered. Residues 555-572 (KGSNVGLNLTKTESSPSP) are compositionally biased toward polar residues.

Belongs to the copine family. Ca(2+) is required as a cofactor.

It is found in the cytoplasm. The protein localises to the membrane. Functionally, required for cytokinesis, contractile vacuole function and development. This is Copine-A (cpnA) from Dictyostelium discoideum (Social amoeba).